The primary structure comprises 620 residues: Chaperone protein HscA homolog (620 aa).

This sequence belongs to the heat shock protein 70 family.

Chaperone involved in the maturation of iron-sulfur cluster-containing proteins. Has a low intrinsic ATPase activity which is markedly stimulated by HscB. This is Chaperone protein HscA homolog from Shewanella sediminis (strain HAW-EB3).